Reading from the N-terminus, the 557-residue chain is Aerobic glycerol-3-phosphate dehydrogenase (557 aa).

21–49 (DVVIVGGGITGAGIALDASNRGMKVALVE) contacts FAD.

It belongs to the FAD-dependent glycerol-3-phosphate dehydrogenase family. It depends on FAD as a cofactor.

It is found in the cytoplasm. It carries out the reaction a quinone + sn-glycerol 3-phosphate = dihydroxyacetone phosphate + a quinol. It functions in the pathway polyol metabolism; glycerol degradation via glycerol kinase pathway; glycerone phosphate from sn-glycerol 3-phosphate (aerobic route): step 1/1. The chain is Aerobic glycerol-3-phosphate dehydrogenase (glpD) from Staphylococcus epidermidis (strain ATCC 35984 / DSM 28319 / BCRC 17069 / CCUG 31568 / BM 3577 / RP62A).